The primary structure comprises 191 residues: Orotate phosphoribosyltransferase (191 aa).

114-122 (EDVVTTGKS) serves as a coordination point for 5-phospho-alpha-D-ribose 1-diphosphate. Residues T118 and R146 each contribute to the orotate site.

The protein belongs to the purine/pyrimidine phosphoribosyltransferase family. PyrE subfamily. Homodimer. Mg(2+) is required as a cofactor.

The enzyme catalyses orotidine 5'-phosphate + diphosphate = orotate + 5-phospho-alpha-D-ribose 1-diphosphate. The protein operates within pyrimidine metabolism; UMP biosynthesis via de novo pathway; UMP from orotate: step 1/2. Its function is as follows. Catalyzes the transfer of a ribosyl phosphate group from 5-phosphoribose 1-diphosphate to orotate, leading to the formation of orotidine monophosphate (OMP). The polypeptide is Orotate phosphoribosyltransferase (Clostridium botulinum (strain ATCC 19397 / Type A)).